We begin with the raw amino-acid sequence, 291 residues long: Popeye domain-containing protein 3 (291 aa).

N-linked (GlcNAc...) asparagine glycosylation occurs at N4. Transmembrane regions (helical) follow at residues 27-44, 48-70, and 77-99; these read GAIY…FMGG, FGLL…WAWV, and IFSW…AYQV.

The protein belongs to the popeye family. As to expression, expressed in cardiac and skeletal muscle.

It localises to the membrane. Functionally, may play a role in the maintenance of heart function mediated, at least in part, through cAMP-binding. May play a role in the regulation of KCNK2-mediated current amplitude. This is Popeye domain-containing protein 3 (Popdc3) from Mus musculus (Mouse).